The sequence spans 46 residues: Protein PsbN (46 aa).

The chain crosses the membrane as a helical span at residues 5–27 (TLVTLFVSGLLMSFTGYALYTAF).

The protein belongs to the PsbN family.

The protein localises to the plastid membrane. May play a role in photosystem I and II biogenesis. The chain is Protein PsbN from Cuscuta obtusiflora (Peruvian dodder).